Reading from the N-terminus, the 119-residue chain is Large ribosomal subunit protein bL20 (119 aa).

The protein belongs to the bacterial ribosomal protein bL20 family.

Its function is as follows. Binds directly to 23S ribosomal RNA and is necessary for the in vitro assembly process of the 50S ribosomal subunit. It is not involved in the protein synthesizing functions of that subunit. This is Large ribosomal subunit protein bL20 from Erythrobacter litoralis (strain HTCC2594).